Consider the following 68-residue polypeptide: Copper transport protein ATOX1 (68 aa).

Residues 1-63 (MPKHEFSVDM…TLKKTGKTVS (63 aa)) form the HMA domain. Cu cation contacts are provided by C12 and C15. Position 47 is a phosphoserine (S47). K60 bears the N6-acetyllysine mark.

Belongs to the ATX1 family. As to quaternary structure, homodimer. Interacts with ATP7B. Interacts with ATP7A. Interacts (via dimer form) with SLC31A1 (via C-terminal domain); this interaction improves ATOX1 stability and controls intracellular Cu(I) levels. As to expression, ubiquitous.

In terms of biological role, binds and deliver cytosolic copper to the copper ATPase proteins. May be important in cellular antioxidant defense. The protein is Copper transport protein ATOX1 of Homo sapiens (Human).